The following is a 559-amino-acid chain: Formate--tetrahydrofolate ligase (559 aa).

Residue 67-74 (TPAGEGKS) participates in ATP binding.

The protein belongs to the formate--tetrahydrofolate ligase family.

It carries out the reaction (6S)-5,6,7,8-tetrahydrofolate + formate + ATP = (6R)-10-formyltetrahydrofolate + ADP + phosphate. The protein operates within one-carbon metabolism; tetrahydrofolate interconversion. The chain is Formate--tetrahydrofolate ligase from Lactobacillus delbrueckii subsp. bulgaricus (strain ATCC BAA-365 / Lb-18).